The following is a 217-amino-acid chain: Large ribosomal subunit protein uL1 (217 aa).

Belongs to the universal ribosomal protein uL1 family. Component of the large ribosomal subunit.

It is found in the cytoplasm. Its function is as follows. Component of the large ribosomal subunit. The ribosome is a large ribonucleoprotein complex responsible for the synthesis of proteins in the cell. The chain is Large ribosomal subunit protein uL1 (rpl10a) from Xenopus laevis (African clawed frog).